We begin with the raw amino-acid sequence, 280 residues long: Putative pyruvate, phosphate dikinase regulatory protein (280 aa).

Residue 154 to 161 (GVSRTSKT) coordinates ADP.

The protein belongs to the pyruvate, phosphate/water dikinase regulatory protein family. PDRP subfamily.

The catalysed reaction is N(tele)-phospho-L-histidyl/L-threonyl-[pyruvate, phosphate dikinase] + ADP = N(tele)-phospho-L-histidyl/O-phospho-L-threonyl-[pyruvate, phosphate dikinase] + AMP + H(+). The enzyme catalyses N(tele)-phospho-L-histidyl/O-phospho-L-threonyl-[pyruvate, phosphate dikinase] + phosphate + H(+) = N(tele)-phospho-L-histidyl/L-threonyl-[pyruvate, phosphate dikinase] + diphosphate. Bifunctional serine/threonine kinase and phosphorylase involved in the regulation of the pyruvate, phosphate dikinase (PPDK) by catalyzing its phosphorylation/dephosphorylation. The polypeptide is Putative pyruvate, phosphate dikinase regulatory protein (Nitrobacter winogradskyi (strain ATCC 25391 / DSM 10237 / CIP 104748 / NCIMB 11846 / Nb-255)).